A 371-amino-acid chain; its full sequence is RNA-binding protein 48 (371 aa).

Positions 46-124 (QYLLIQGVPA…GLLHVCYAPE (79 aa)) constitute an RRM domain. 2 disordered regions span residues 157–191 (KPVP…PESP) and 348–371 (VPKP…RRRI). Over residues 158–170 (PVPEQKGTKDSRQ) the composition is skewed to basic and acidic residues.

Belongs to the RBM48 family. As to quaternary structure, component of the minor spliceosome. Within this complex, interacts with ARMC7 and PRPF8/PRP8.

In terms of biological role, as a component of the minor spliceosome, involved in the splicing of U12-type introns in pre-mRNAs. This is RNA-binding protein 48 (Rbm48) from Mus musculus (Mouse).